The chain runs to 429 residues: Maltoporin 2 (429 aa).

An N-terminal signal peptide occupies residues 1–25; it reads MMITLRKLPLAVAVAAGVMSAQALA. The segment covering 397–412 has biased composition (polar residues); sequence GLQTKDSSGSGAFTSS. The disordered stretch occupies residues 397-416; it reads GLQTKDSSGSGAFTSSRGDD.

Belongs to the porin LamB (TC 1.B.3) family. Homotrimer formed of three 18-stranded antiparallel beta-barrels, containing three independent channels.

The protein resides in the cell outer membrane. It carries out the reaction beta-maltose(in) = beta-maltose(out). Functionally, involved in the transport of maltose and maltodextrins. This Klebsiella pneumoniae subsp. pneumoniae (strain ATCC 700721 / MGH 78578) protein is Maltoporin 2.